A 245-amino-acid polypeptide reads, in one-letter code: Probable transcriptional regulatory protein LVIS_1199 (245 aa).

Positions 1–23 (MSGHSKWHNIQGRKNAQDAKRGK) are disordered.

The protein belongs to the TACO1 family.

Its subcellular location is the cytoplasm. This Levilactobacillus brevis (strain ATCC 367 / BCRC 12310 / CIP 105137 / JCM 1170 / LMG 11437 / NCIMB 947 / NCTC 947) (Lactobacillus brevis) protein is Probable transcriptional regulatory protein LVIS_1199.